Here is a 445-residue protein sequence, read N- to C-terminus: Phosphoglucosamine mutase (445 aa).

The active-site Phosphoserine intermediate is Ser-99. Ser-99, Asp-242, Asp-244, and Asp-246 together coordinate Mg(2+). Residue Ser-99 is modified to Phosphoserine.

Belongs to the phosphohexose mutase family. Requires Mg(2+) as cofactor. Post-translationally, activated by phosphorylation.

It carries out the reaction alpha-D-glucosamine 1-phosphate = D-glucosamine 6-phosphate. Functionally, catalyzes the conversion of glucosamine-6-phosphate to glucosamine-1-phosphate. The polypeptide is Phosphoglucosamine mutase (Sulfurovum sp. (strain NBC37-1)).